A 100-amino-acid polypeptide reads, in one-letter code: MAKKSMIERERKREELVSKYEKKRLELKSKLKKTAEYEEKLEVYKKIQEIPRNAFPSRLRNRCWVTGRSRGYYRDFGLSRHVLREMVHDCLLPGVTKSSW.

This sequence belongs to the universal ribosomal protein uS14 family. Part of the 30S ribosomal subunit.

The protein resides in the plastid. The protein localises to the chloroplast. Functionally, binds 16S rRNA, required for the assembly of 30S particles. In Guillardia theta (Cryptophyte), this protein is Small ribosomal subunit protein uS14c.